We begin with the raw amino-acid sequence, 28 residues long: Dermaseptin-SP1 (28 aa).

Expressed by the skin glands.

It localises to the secreted. In terms of biological role, probable antimicrobial peptide which stimulates insulin-release in glucose-responsive BRIN-BD 11 cells. This chain is Dermaseptin-SP1, found in Agalychnis spurrelli (Gliding leaf frog).